The chain runs to 313 residues: MPIRIPDQLPASDVLREENIFIMPLSRASTQEIRPLRVLILNLMPKKIETETQFLRLLSNSPLQVDVELLRIDDRPSKNTPTEHLDNFYRQFEMVKGRNFDGLIITGAPLGLVQFEDVIYWDHLKTIMEWANKHVTSTLYVCWAAQAGLKLLYDLPKRTRKDKLSGVYNHEIHNPYHPILRGFDDTFLAPHSRYADFSQEYLAEHTDLDVLATSDVAGVYLAATKDKRNVFVTGHPEYDAHTLHNEYIRDLGEGMEPVIPINYYPNNNPDNKPVASWRSHGHLLFSNWLNYCVYQQTPYDLDHFSEDNFTKDD.

Cysteine 142 acts as the Acyl-thioester intermediate in catalysis. Substrate contacts are provided by lysine 163 and serine 192. Histidine 235 (proton acceptor) is an active-site residue. Residue glutamate 237 is part of the active site. Arginine 249 provides a ligand contact to substrate.

Belongs to the MetA family.

It localises to the cytoplasm. It catalyses the reaction L-homoserine + succinyl-CoA = O-succinyl-L-homoserine + CoA. Its pathway is amino-acid biosynthesis; L-methionine biosynthesis via de novo pathway; O-succinyl-L-homoserine from L-homoserine: step 1/1. Transfers a succinyl group from succinyl-CoA to L-homoserine, forming succinyl-L-homoserine. This chain is Homoserine O-succinyltransferase, found in Vibrio atlanticus (strain LGP32) (Vibrio splendidus (strain Mel32)).